A 224-amino-acid chain; its full sequence is uncharacterized protein (224 aa).

The Zn(2+) site is built by histidine 57, histidine 59, aspartate 61, histidine 62, histidine 138, aspartate 162, and histidine 203.

The protein belongs to the metallo-beta-lactamase superfamily. Glyoxalase II family. Requires Zn(2+) as cofactor.

This is an uncharacterized protein from Mycobacterium tuberculosis (strain CDC 1551 / Oshkosh).